A 547-amino-acid polypeptide reads, in one-letter code: Chaperonin GroEL 1 (547 aa).

ATP-binding positions include 30–33 (TLGP), K51, 87–91 (DGTTT), G415, 479–481 (NAA), and D495.

It belongs to the chaperonin (HSP60) family. As to quaternary structure, forms a cylinder of 14 subunits composed of two heptameric rings stacked back-to-back. Interacts with the co-chaperonin GroES.

It is found in the cytoplasm. It carries out the reaction ATP + H2O + a folded polypeptide = ADP + phosphate + an unfolded polypeptide.. Functionally, together with its co-chaperonin GroES, plays an essential role in assisting protein folding. The GroEL-GroES system forms a nano-cage that allows encapsulation of the non-native substrate proteins and provides a physical environment optimized to promote and accelerate protein folding. The chain is Chaperonin GroEL 1 from Vibrio parahaemolyticus serotype O3:K6 (strain RIMD 2210633).